The chain runs to 137 residues: Peptide methionine sulfoxide reductase MsrB (137 aa).

The MsrB domain occupies 7 to 129 (VDDLKENLSE…NSASLSFTDE (123 aa)). 4 residues coordinate Zn(2+): Cys46, Cys49, Cys95, and Cys98. Cys118 (nucleophile) is an active-site residue.

This sequence belongs to the MsrB Met sulfoxide reductase family. Requires Zn(2+) as cofactor.

The catalysed reaction is L-methionyl-[protein] + [thioredoxin]-disulfide + H2O = L-methionyl-(R)-S-oxide-[protein] + [thioredoxin]-dithiol. The chain is Peptide methionine sulfoxide reductase MsrB from Escherichia fergusonii (strain ATCC 35469 / DSM 13698 / CCUG 18766 / IAM 14443 / JCM 21226 / LMG 7866 / NBRC 102419 / NCTC 12128 / CDC 0568-73).